The primary structure comprises 299 residues: Arginase (299 aa).

Positions 99, 122, 124, and 126 each coordinate Mn(2+). Substrate is bound by residues 124-128 (HGDVN), 135-137 (SGN), and Asp178. 2 residues coordinate Mn(2+): Asp226 and Asp228. Thr240 and Glu271 together coordinate substrate.

It belongs to the arginase family. In terms of assembly, homohexamer. Mn(2+) serves as cofactor.

It catalyses the reaction L-arginine + H2O = urea + L-ornithine. It participates in nitrogen metabolism; urea cycle; L-ornithine and urea from L-arginine: step 1/1. Controls arginine catabolism. The polypeptide is Arginase (rocF) (Bacillus caldovelox).